The sequence spans 222 residues: Large ribosomal subunit protein uL4 (222 aa).

It belongs to the universal ribosomal protein uL4 family. Part of the 50S ribosomal subunit.

In terms of biological role, one of the primary rRNA binding proteins, this protein initially binds near the 5'-end of the 23S rRNA. It is important during the early stages of 50S assembly. It makes multiple contacts with different domains of the 23S rRNA in the assembled 50S subunit and ribosome. Functionally, forms part of the polypeptide exit tunnel. This is Large ribosomal subunit protein uL4 from Methylacidiphilum infernorum (isolate V4) (Methylokorus infernorum (strain V4)).